Here is a 216-residue protein sequence, read N- to C-terminus: Sporozoite antigen (216 aa).

Positions Gln-194 to Trp-216 are disordered.

In Eimeria tenella (Coccidian parasite), this protein is Sporozoite antigen.